Here is a 208-residue protein sequence, read N- to C-terminus: Small ribosomal subunit protein bS6 (208 aa).

Disordered stretches follow at residues 121–143 (SENN…KPRL) and 185–208 (NQQT…GAKP). The span at 185–195 (NQQTSQANNNQ) shows a compositional bias: low complexity.

This sequence belongs to the bacterial ribosomal protein bS6 family.

Its function is as follows. Binds together with bS18 to 16S ribosomal RNA. This is Small ribosomal subunit protein bS6 (rpsF) from Mycoplasma genitalium (strain ATCC 33530 / DSM 19775 / NCTC 10195 / G37) (Mycoplasmoides genitalium).